Here is a 203-residue protein sequence, read N- to C-terminus: uncharacterized protein (203 aa).

A disordered region spans residues 174–203; the sequence is LASSKNPRARSPGLDPLGSSETLWSHRGGH.

This is an uncharacterized protein from Homo sapiens (Human).